The sequence spans 216 residues: UPF0301 protein BBta_6966 (216 aa).

The protein belongs to the UPF0301 (AlgH) family.

The protein is UPF0301 protein BBta_6966 of Bradyrhizobium sp. (strain BTAi1 / ATCC BAA-1182).